The primary structure comprises 64 residues: Disintegrin VB7B (64 aa).

The Disintegrin domain maps to 1-64; that stretch reads ELLQNSGNPC…TGISSDCPRN (64 aa). 4 disulfides stabilise this stretch: Cys10/Cys33, Cys24/Cys30, Cys29/Cys54, and Cys42/Cys61. The short motif at 46–48 is the Cell attachment site; atypical (KGD) element; it reads KGD.

The protein belongs to the venom metalloproteinase (M12B) family. P-II subfamily. P-IIe sub-subfamily. Heterodimer with VB7A; disulfide-linked. Expressed by the venom gland.

The protein resides in the secreted. Poor inhibitor of platelet aggregation. The disintegrin inhibits the adhesion of cells expressing the RGD-dependent integrin alpha-5/beta-1 (ITGA5/ITGB1) to immobilized fibronectin. Inhibition on alpha-IIb/beta-3 (ITGA2B/ITGB3) is low. The sequence is that of Disintegrin VB7B from Vipera berus berus (Common viper).